The sequence spans 149 residues: Deoxyuridine 5'-triphosphate nucleotidohydrolase (149 aa).

Substrate contacts are provided by residues 68 to 70 (RSG), N81, 85 to 87 (LID), and M95.

Belongs to the dUTPase family. Mg(2+) serves as cofactor.

The enzyme catalyses dUTP + H2O = dUMP + diphosphate + H(+). The protein operates within pyrimidine metabolism; dUMP biosynthesis; dUMP from dCTP (dUTP route): step 2/2. Functionally, this enzyme is involved in nucleotide metabolism: it produces dUMP, the immediate precursor of thymidine nucleotides and it decreases the intracellular concentration of dUTP so that uracil cannot be incorporated into DNA. This chain is Deoxyuridine 5'-triphosphate nucleotidohydrolase, found in Methylibium petroleiphilum (strain ATCC BAA-1232 / LMG 22953 / PM1).